The primary structure comprises 142 residues: Hemoglobin subunit alpha (142 aa).

The 141-residue stretch at 2–142 (KLSAEDKHNV…VGHVLTSKYR (141 aa)) folds into the Globin domain. His59 contributes to the O2 binding site. His88 contacts heme b.

It belongs to the globin family. In terms of assembly, heterotetramer of two alpha chains and two beta chains. In terms of tissue distribution, red blood cells.

Its function is as follows. Involved in oxygen transport from the lung to the various peripheral tissues. This is Hemoglobin subunit alpha (HBA) from Taricha granulosa (Roughskin newt).